Here is a 151-residue protein sequence, read N- to C-terminus: Large ribosomal subunit protein bL9 (151 aa).

Belongs to the bacterial ribosomal protein bL9 family.

Its function is as follows. Binds to the 23S rRNA. This chain is Large ribosomal subunit protein bL9, found in Lactobacillus johnsonii (strain CNCM I-12250 / La1 / NCC 533).